A 289-amino-acid chain; its full sequence is 4-diphosphocytidyl-2-C-methyl-D-erythritol kinase (289 aa).

The active site involves K10. 99-109 is a binding site for ATP; the sequence is PMGGGLGGGSS. D141 is a catalytic residue.

This sequence belongs to the GHMP kinase family. IspE subfamily. In terms of assembly, homodimer.

It carries out the reaction 4-CDP-2-C-methyl-D-erythritol + ATP = 4-CDP-2-C-methyl-D-erythritol 2-phosphate + ADP + H(+). The protein operates within isoprenoid biosynthesis; isopentenyl diphosphate biosynthesis via DXP pathway; isopentenyl diphosphate from 1-deoxy-D-xylulose 5-phosphate: step 3/6. Functionally, catalyzes the phosphorylation of the position 2 hydroxy group of 4-diphosphocytidyl-2C-methyl-D-erythritol. The chain is 4-diphosphocytidyl-2-C-methyl-D-erythritol kinase from Enterobacter sp. (strain 638).